Consider the following 217-residue polypeptide: Ribonuclease HII (217 aa).

The region spanning 27-216 is the RNase H type-2 domain; that stretch reads SRIAGVDEAG…VKESIREGIC (190 aa). Asp33, Glu34, and Asp126 together coordinate a divalent metal cation.

This sequence belongs to the RNase HII family. Mn(2+) is required as a cofactor. Mg(2+) serves as cofactor.

The protein localises to the cytoplasm. It carries out the reaction Endonucleolytic cleavage to 5'-phosphomonoester.. Endonuclease that specifically degrades the RNA of RNA-DNA hybrids. The sequence is that of Ribonuclease HII (rnhB) from Chlamydia muridarum (strain MoPn / Nigg).